Consider the following 314-residue polypeptide: Olfactory receptor 8U9 (314 aa).

At Met1–Met25 the chain is on the extracellular side. N-linked (GlcNAc...) asparagine glycosylation occurs at Asn5. A helical transmembrane segment spans residues Pro26–Ile46. The Cytoplasmic portion of the chain corresponds to Leu47–Arg54. The helical transmembrane segment at Leu55–Ser75 threads the bilayer. Topologically, residues Val76–Ala99 are extracellular. A disulfide bridge connects residues Cys97 and Cys189. The helical transmembrane segment at Gln100–Tyr120 threads the bilayer. At Asp121–Met133 the chain is on the cytoplasmic side. Residues Val134–Leu154 traverse the membrane as a helical segment. The Extracellular segment spans residues Val155–Gln196. Residues Leu197–Ser217 form a helical membrane-spanning segment. Topologically, residues Tyr218–Ala237 are cytoplasmic. The helical transmembrane segment at Phe238 to Met258 threads the bilayer. Residues Tyr259–Asp271 are Extracellular-facing. Asn265 carries N-linked (GlcNAc...) asparagine glycosylation. Residues Lys272–Leu292 form a helical membrane-spanning segment. Residues Arg293–Ser314 are Cytoplasmic-facing.

It belongs to the G-protein coupled receptor 1 family.

It localises to the cell membrane. Potential odorant receptor. This chain is Olfactory receptor 8U9, found in Mus musculus (Mouse).